Consider the following 555-residue polypeptide: MSEAEARPTNFIRQIIDEDLASGKHTTVHTRFPPEPNGYLHIGHAKSICLNFGIAQDYQGQCNLRFDDTNPVKEDIEYVDSIKNDVEWLGFHWSGDIRYSSDYFDQLHAYAVELINKGLAYVDELTPEQIREYRGTLTAPGKNSPFRDRSVEENLALFEKMRTGGFEEGKACLRAKIDMASPFIVMRDPVLYRIKFAEHHQTGNKWCIYPMYDFTHCISDALEGITHSLCTLEFQDNRRLYDWVLDNITIPVHPRQYEFSRLNLEYTVMSKRKLNLLVTDKHVEGWDDPRMPTISGLRRRGYTAASIREFCKRIGVTKQDNTIEMASLESCIREDLNENAPRAMAVIDPVKLVIENYPQGESEMVTMPNHPNKPEMGSREVPFSGEIWIDRADFREEANKQYKRLVMGKEVRLRNAYVIKAERVEKDAEGNITTIFCTYDADTLSKDPADGRKVKGVIHWVSAAHALPIEIRLYDRLFSVPNPGAAEDFLSVINPESLVIKRGYGEPSLKAAVAGKAFQFEREGYFCLDSRYATADKLVFNRTVGLRDTWAKAGE.

The 'HIGH' region signature appears at 34–44 (PEPNGYLHIGH). ATP is bound by residues 35-37 (EPN) and 41-47 (HIGHAKS). Residues aspartate 67 and tyrosine 212 each contribute to the L-glutamine site. ATP-binding positions include threonine 231, 261-262 (RL), and 269-271 (MSK). The 'KMSKS' region motif lies at 268-272 (VMSKR). Residues 317-324 (TKQDNTIE) are interaction with tRNA.

This sequence belongs to the class-I aminoacyl-tRNA synthetase family. As to quaternary structure, monomer.

The protein localises to the cytoplasm. The catalysed reaction is tRNA(Gln) + L-glutamine + ATP = L-glutaminyl-tRNA(Gln) + AMP + diphosphate. The protein is Glutamine--tRNA ligase of Salmonella newport (strain SL254).